We begin with the raw amino-acid sequence, 439 residues long: GlutamylGlutaminyl-tRNA synthetase (439 aa).

The 'HIGH' region motif lies at Pro6–Asn16. The 'KMSKS' region signature appears at Lys232–Arg236. Lys235 lines the ATP pocket.

Belongs to the class-I aminoacyl-tRNA synthetase family. Glutamate--tRNA ligase type 1 subfamily. In terms of assembly, monomer.

Its subcellular location is the cytoplasm. It carries out the reaction tRNA(Glu) + L-glutamate + ATP = L-glutamyl-tRNA(Gln) + AMP + diphosphate. Functionally, aminoacylates tRNA(Gln) with glutamate. Does not aminoacylate tRNA(Glu). In Helicobacter pylori (strain ATCC 700392 / 26695) (Campylobacter pylori), this protein is GlutamylGlutaminyl-tRNA synthetase (gltX2).